A 28-amino-acid polypeptide reads, in one-letter code: Potassium channel toxin kappa-KTx 2.9 (28 aa).

2 cysteine pairs are disulfide-bonded: Cys-4-Cys-22 and Cys-8-Cys-18.

Belongs to the short scorpion toxin superfamily. Potassium channel inhibitor family. Gamma-KTx 2 subfamily. In terms of processing, contains 2 disulfide bonds. As to expression, expressed by the venom gland.

The protein resides in the secreted. Functionally, reversibly blocks voltage-gated potassium channels Kv1.2/KCNA2 and Kv1.3/KCNA3. In Pandinus imperator (Emperor scorpion), this protein is Potassium channel toxin kappa-KTx 2.9.